The sequence spans 128 residues: Large ribosomal subunit protein bL20 (128 aa).

This sequence belongs to the bacterial ribosomal protein bL20 family.

Binds directly to 23S ribosomal RNA and is necessary for the in vitro assembly process of the 50S ribosomal subunit. It is not involved in the protein synthesizing functions of that subunit. The sequence is that of Large ribosomal subunit protein bL20 from Anaplasma marginale (strain Florida).